The sequence spans 351 residues: MVASNLTLQQRGWFDVLDDWLKRDRFVFVGWSGLLLFPTAYLAIGGWLTGTTFVTSWYTHGLASSYLEGANFLTAAVSTPADAMGHSLLLLWGPEAQGDFIRWCQLGGLWAFVALHGAFALIGFMLRQFELARLIGIRPYNAIAFSGPIAVFVSVFLIYPLGQSSWFFAPSFGVAAIFRFLLFLQGFHNWTLNPFHMMGVAGILGGALLSAIHGVTVENTLYQDGEQANTFKAFDSTQEEETYSMVTANRFWSQIFGIAFSNKRWLHFFMLFVPVMGLWTSSIGIIGLALNLRAYDFVSQEIRASEDPEFETFYTKNILLNEGLRAWLAPVDQPHENFVFPEEVLPRGNAL.

A helical membrane pass occupies residues T39–T59. H116 lines the chlorophyll a pocket. A helical membrane pass occupies residues G123–P139. Residues Q128 and N141 each contribute to the pheophytin a site. A helical membrane pass occupies residues V151 to S164. Residue H196 coordinates chlorophyll a. The helical transmembrane segment at G206–E226 threads the bilayer. 2 residues coordinate a plastoquinone: H213 and F260. A Fe cation-binding site is contributed by H213. Position 267 (H267) interacts with Fe cation. The helical transmembrane segment at G277–R293 threads the bilayer.

Belongs to the reaction center PufL/M/PsbA/D family. As to quaternary structure, PSII is composed of 1 copy each of membrane proteins PsbA, PsbB, PsbC, PsbD, PsbE, PsbF, PsbH, PsbI, PsbJ, PsbK, PsbL, PsbM, PsbT, PsbX, PsbY, PsbZ, Psb30/Ycf12, peripheral proteins PsbO, CyanoQ (PsbQ), PsbU, PsbV and a large number of cofactors. It forms dimeric complexes. The D1/D2 heterodimer binds P680, chlorophylls that are the primary electron donor of PSII, and subsequent electron acceptors. It shares a non-heme iron and each subunit binds pheophytin, quinone, additional chlorophylls, carotenoids and lipids. There is also a Cl(-1) ion associated with D1 and D2, which is required for oxygen evolution. The PSII complex binds additional chlorophylls, carotenoids and specific lipids. serves as cofactor.

It localises to the host cellular thylakoid membrane. The enzyme catalyses 2 a plastoquinone + 4 hnu + 2 H2O = 2 a plastoquinol + O2. Its function is as follows. Photosystem II (PSII) is a light-driven water:plastoquinone oxidoreductase that uses light energy to abstract electrons from H(2)O, generating O(2) and a proton gradient subsequently used for ATP formation. It consists of a core antenna complex that captures photons, and an electron transfer chain that converts photonic excitation into a charge separation. The D1/D2 (PsbA/PsbD) reaction center heterodimer binds P680, the primary electron donor of PSII as well as several subsequent electron acceptors. D2 is needed for assembly of a stable PSII complex. This Synechococcus phage S-RSM2 protein is Photosystem II D2 protein (psbD).